The sequence spans 328 residues: Phosphate acyltransferase (328 aa).

Belongs to the PlsX family. Homodimer. Probably interacts with PlsY.

It localises to the cytoplasm. The catalysed reaction is a fatty acyl-[ACP] + phosphate = an acyl phosphate + holo-[ACP]. Its pathway is lipid metabolism; phospholipid metabolism. Its function is as follows. Catalyzes the reversible formation of acyl-phosphate (acyl-PO(4)) from acyl-[acyl-carrier-protein] (acyl-ACP). This enzyme utilizes acyl-ACP as fatty acyl donor, but not acyl-CoA. The polypeptide is Phosphate acyltransferase (Mycoplasma genitalium (strain ATCC 33530 / DSM 19775 / NCTC 10195 / G37) (Mycoplasmoides genitalium)).